A 386-amino-acid polypeptide reads, in one-letter code: MAP kinase-activated protein kinase 2 (386 aa).

A disordered region spans residues 1 to 29; that stretch reads MLSGSPGQTPPAPFPSPPPPAPAQPPPPF. Positions 8-29 are enriched in pro residues; that stretch reads QTPPAPFPSPPPPAPAQPPPPF. A Protein kinase domain is found at 50–311; that stretch reads KVTSQVLGLG…ITEFMNHPWI (262 aa). ATP contacts are provided by residues 56 to 64 and Lys79; that span reads LGLGINGKV. 125–127 serves as a coordination point for staurosporine; it reads ECL. Catalysis depends on Asp172, which acts as the Proton acceptor. Thr208 carries the phosphothreonine; by MAPK14 modification. Ser258 is subject to Phosphoserine; by MAPK14. Ser314 carries the post-translational modification Phosphoserine; by autocatalysis. The interval 314–350 is autoinhibitory helix; it reads STKVPQTPLHTSRVLKEDKERWEDVKEEMTSALATMR. At Thr320 the chain carries Phosphothreonine; by MAPK14. 2 consecutive short sequence motifs (nuclear export signal (NES)) follow at residues 331-354 and 342-351; these read DKERWEDVKEEMTSALATMRVDYE and MTSALATMRV. Residue Lys339 forms a Glycyl lysine isopeptide (Lys-Gly) (interchain with G-Cter in SUMO) linkage. The p38 MAPK-binding site stretch occupies residues 352–376; sequence DYEQIKIKKIEDASNPLLLKRRKKA. Short sequence motifs (bipartite nuclear localization signal) lie at residues 357-360 and 371-375; these read KIKK and KRRKK.

Belongs to the protein kinase superfamily. CAMK Ser/Thr protein kinase family. Heterodimer with p38-alpha/MAPK14; this heterodimer forms a stable complex: molecules are positioned 'face to face' so that the ATP-binding sites of both kinases are at the heterodimer interface. Interacts with PHC2. Interacts with HSF1. In terms of processing, sumoylation inhibits the protein kinase activity. Phosphorylated and activated by MAP kinase p38-alpha/MAPK14 at Thr-208; Ser-258 and Thr-320. In terms of tissue distribution, ubiquitously expressed (at protein level).

The protein localises to the cytoplasm. Its subcellular location is the nucleus. The enzyme catalyses L-seryl-[protein] + ATP = O-phospho-L-seryl-[protein] + ADP + H(+). It catalyses the reaction L-threonyl-[protein] + ATP = O-phospho-L-threonyl-[protein] + ADP + H(+). Its activity is regulated as follows. Activated following phosphorylation by p38-alpha/MAPK14 following various stresses. Inhibited following sumoylation. Specifically inhibited by pyrrolopyridine inhibitors. Functionally, stress-activated serine/threonine-protein kinase involved in cytokine production, endocytosis, reorganization of the cytoskeleton, cell migration, cell cycle control, chromatin remodeling, DNA damage response and transcriptional regulation. Following stress, it is phosphorylated and activated by MAP kinase p38-alpha/MAPK14, leading to phosphorylation of substrates. Phosphorylates serine in the peptide sequence, Hyd-X-R-X(2)-S, where Hyd is a large hydrophobic residue. Phosphorylates ALOX5, CDC25B, CDC25C, CEP131, ELAVL1, HNRNPA0, HSP27/HSPB1, KRT18, KRT20, LIMK1, LSP1, PABPC1, PARN, PDE4A, RCSD1, RPS6KA3, TAB3 and TTP/ZFP36. Phosphorylates HSF1; leading to the interaction with HSP90 proteins and inhibiting HSF1 homotrimerization, DNA-binding and transactivation activities. Mediates phosphorylation of HSP27/HSPB1 in response to stress, leading to dissociation of HSP27/HSPB1 from large small heat-shock protein (sHsps) oligomers and impairment of their chaperone activities and ability to protect against oxidative stress effectively. Involved in inflammatory response by regulating tumor necrosis factor (TNF) and IL6 production post-transcriptionally: acts by phosphorylating AU-rich elements (AREs)-binding proteins ELAVL1, HNRNPA0, PABPC1 and TTP/ZFP36, leading to regulation of the stability and translation of TNF and IL6 mRNAs. Phosphorylation of TTP/ZFP36, a major post-transcriptional regulator of TNF, promotes its binding to 14-3-3 proteins and reduces its ARE mRNA affinity leading to inhibition of dependent degradation of ARE-containing transcripts. Phosphorylates CEP131 in response to cellular stress following ultraviolet irradiation which promotes binding of CEP131 to 14-3-3 proteins and inhibits formation of novel centriolar satellites. Also involved in late G2/M checkpoint following DNA damage through a process of post-transcriptional mRNA stabilization: following DNA damage, relocalizes from nucleus to cytoplasm and phosphorylates HNRNPA0 and PARN, leading to stabilization of GADD45A mRNA. Involved in toll-like receptor signaling pathway (TLR) in dendritic cells: required for acute TLR-induced macropinocytosis by phosphorylating and activating RPS6KA3. The chain is MAP kinase-activated protein kinase 2 (Mapkapk2) from Mus musculus (Mouse).